Reading from the N-terminus, the 262-residue chain is Acyl-[acyl-carrier-protein]--UDP-N-acetylglucosamine O-acyltransferase (262 aa).

This sequence belongs to the transferase hexapeptide repeat family. LpxA subfamily. In terms of assembly, homotrimer.

Its subcellular location is the cytoplasm. The enzyme catalyses a (3R)-hydroxyacyl-[ACP] + UDP-N-acetyl-alpha-D-glucosamine = a UDP-3-O-[(3R)-3-hydroxyacyl]-N-acetyl-alpha-D-glucosamine + holo-[ACP]. Its pathway is glycolipid biosynthesis; lipid IV(A) biosynthesis; lipid IV(A) from (3R)-3-hydroxytetradecanoyl-[acyl-carrier-protein] and UDP-N-acetyl-alpha-D-glucosamine: step 1/6. In terms of biological role, involved in the biosynthesis of lipid A, a phosphorylated glycolipid that anchors the lipopolysaccharide to the outer membrane of the cell. This Vibrio cholerae serotype O1 (strain ATCC 39541 / Classical Ogawa 395 / O395) protein is Acyl-[acyl-carrier-protein]--UDP-N-acetylglucosamine O-acyltransferase.